The following is a 311-amino-acid chain: JNK1/MAPK8-associated membrane protein (311 aa).

Residues 1–57 are Lumenal-facing; the sequence is MAVDIQPACLGLYCGKTLLFKNGSTEIYGECGVCPRGQRTNAQKYCQPCTESPELYD. N22 carries an N-linked (GlcNAc...) asparagine glycan. A helical transmembrane segment spans residues 58–78; it reads WLYLGFMAMLPLVLHWFFIEW. Topologically, residues 79–87 are cytoplasmic; that stretch reads YSGKKSSSA. A helical membrane pass occupies residues 88 to 108; the sequence is LFQHITALFECSMAAIITLLV. The Lumenal segment spans residues 109–149; that stretch reads SDPVGVLYIRSCRVLMLSDWYTMLYNPSPDYVTTVHCTHEA. The helical transmembrane segment at 150–170 threads the bilayer; that stretch reads VYPLYTIVFIYYAFCLVLMML. Residues 171–188 are Cytoplasmic-facing; the sequence is LRPLLVKKIACGLGKSDR. A helical transmembrane segment spans residues 189–209; sequence FKSIYAALYFFPILTVLQAVG. Residue G210 is a topological domain, lumenal. The chain crosses the membrane as a helical span at residues 211 to 231; the sequence is GLLYYAFPYIILVLSLVTLAV. The Cytoplasmic segment spans residues 232–250; the sequence is YMSASEIENCYDLLVRKKR. A helical transmembrane segment spans residues 251 to 271; it reads LIVLFSHWLLHAYGIISISRV. Topologically, residues 272 to 277 are lumenal; it reads DKLEQD. The helical transmembrane segment at 278-298 threads the bilayer; it reads LPLLALVPTPALFYLFTAKFT. At 299–311 the chain is on the cytoplasmic side; sequence EPSRILSEGANGH.

In terms of assembly, interacts with RNF5 and MAPK8, but not with MAPK9. Binding to MAPK8 occurs before and after exposure to stress, such as UV irradiation. After exposure to stress, interacts with phosphorylated MAPK8. Competes with DUSP10 for MAPK8 binding. Associates with multiple components of the proteasome and with ERAD regulatory proteins including AMFR/GP78, CANX, PSMC1, PSMC2, PSMC3/TBP1, PSMC5, PSMC6, PSMD8, SEC61-ALPHA and UFD1. Interacts with DERL1 (in the presence of misfolded protein CFTR(F508del)). Ubiquitinated by RNF5 via 'Lys-63'-linked ubiquitin linkage in a UBE2N-dependent manner. Ubiquitination decreases association with components of the proteasome and ERAD.

Its subcellular location is the endoplasmic reticulum membrane. In terms of biological role, regulates the duration of MAPK8 activity in response to various stress stimuli. Facilitates degradation of misfolded endoplasmic reticulum (ER) proteins through the recruitment of components of the proteasome and endoplasmic reticulum-associated degradation (ERAD) system. The chain is JNK1/MAPK8-associated membrane protein (JKAMP) from Homo sapiens (Human).